Consider the following 372-residue polypeptide: BTB/POZ and TAZ domain-containing protein 4 (372 aa).

The interval 14 to 37 (SADSSSVPIPPPLPSKSDGLKKKL) is disordered. Residues 60 to 128 (ADVVIYTDNG…LYSSCYEKEE (69 aa)) form the BTB domain. A TAZ-type zinc finger spans residues 238-330 (RIYSQLYEAM…SDQCRVPLCR (93 aa)). Residues 341 to 364 (KKDESRWKLLVKNVLGSKKIGGSP) are caM-binding.

As to quaternary structure, interacts with GTE11/BET10 through the BTB domain. In terms of tissue distribution, preferentially expressed in leaves, stems and flowers.

It localises to the cytoplasm. It functions in the pathway protein modification; protein ubiquitination. In terms of biological role, may act as a substrate-specific adapter of an E3 ubiquitin-protein ligase complex (CUL3-RBX1-BTB) which mediates the ubiquitination and subsequent proteasomal degradation of target proteins. In Arabidopsis thaliana (Mouse-ear cress), this protein is BTB/POZ and TAZ domain-containing protein 4 (BT4).